A 341-amino-acid chain; its full sequence is Tetraacyldisaccharide 4'-kinase (341 aa).

64–71 serves as a coordination point for ATP; that stretch reads AVGGSGKT.

This sequence belongs to the LpxK family.

It carries out the reaction a lipid A disaccharide + ATP = a lipid IVA + ADP + H(+). The protein operates within glycolipid biosynthesis; lipid IV(A) biosynthesis; lipid IV(A) from (3R)-3-hydroxytetradecanoyl-[acyl-carrier-protein] and UDP-N-acetyl-alpha-D-glucosamine: step 6/6. In terms of biological role, transfers the gamma-phosphate of ATP to the 4'-position of a tetraacyldisaccharide 1-phosphate intermediate (termed DS-1-P) to form tetraacyldisaccharide 1,4'-bis-phosphate (lipid IVA). The sequence is that of Tetraacyldisaccharide 4'-kinase from Azoarcus sp. (strain BH72).